Reading from the N-terminus, the 161-residue chain is Allophycocyanin alpha chain (161 aa).

N71 is modified (N4-methylasparagine). C81 contributes to the (2R,3E)-phycocyanobilin binding site.

The protein belongs to the phycobiliprotein family. Heterodimer of an alpha and a beta chain. In terms of processing, contains one covalently linked phycocyanobilin chromophore.

It is found in the plastid. Its subcellular location is the cyanelle thylakoid membrane. Its function is as follows. Light-harvesting photosynthetic bile pigment-protein from the phycobiliprotein complex. Allophycocyanin has a maximum absorption at approximately 650 nanometers. This Cyanophora paradoxa protein is Allophycocyanin alpha chain (apcA).